The following is a 336-amino-acid chain: DNA repair protein RAD51 homolog A (336 aa).

The HhH domain maps to 45-74 (TVEAVAYAPKKELLNIKGISEAKAEKILAE). Residue 124 to 131 (GEFRTGKT) coordinates ATP. The Nuclear export signal signature appears at 242 to 257 (LARFLRMLLRLADEFG).

The protein belongs to the RecA family. RAD51 subfamily. As to quaternary structure, forms linear homooligomers, giving rise to a RAD51 nucleoprotein filament, which is essential for strand-pairing reactions during DNA recombination.

The protein resides in the nucleus. It is found in the cytoplasm. It localises to the chromosome. In terms of biological role, plays an important role in homologous strand exchange, a key step in DNA repair through homologous recombination (HR). Binds to single-stranded DNA in an ATP-dependent manner to form nucleoprotein filaments which are essential for the homology search and strand exchange. Catalyzes the recognition of homology and strand exchange between homologous DNA partners to form a joint molecule between a processed DNA break and the repair template. Recruited to resolve stalled replication forks during replication stress. Also involved in interstrand cross-link repair. This is DNA repair protein RAD51 homolog A (rad51-a) from Xenopus laevis (African clawed frog).